The primary structure comprises 421 residues: U-box domain-containing protein 25 (421 aa).

The U-box domain occupies Q13–N88.

The catalysed reaction is S-ubiquitinyl-[E2 ubiquitin-conjugating enzyme]-L-cysteine + [acceptor protein]-L-lysine = [E2 ubiquitin-conjugating enzyme]-L-cysteine + N(6)-ubiquitinyl-[acceptor protein]-L-lysine.. The protein operates within protein modification; protein ubiquitination. Its function is as follows. Functions as an E3 ubiquitin ligase. In Arabidopsis thaliana (Mouse-ear cress), this protein is U-box domain-containing protein 25 (PUB25).